A 498-amino-acid polypeptide reads, in one-letter code: POU domain protein 2, isoform A (498 aa).

The span at 1–30 shows a compositional bias: low complexity; it reads MMVLQQQQQQRLWDATTTSNTNTQTQQSAN. A disordered region spans residues 1 to 35; the sequence is MMVLQQQQQQRLWDATTTSNTNTQTQQSANVESTP. Residues serine 72, serine 211, serine 215, serine 217, and serine 219 each carry the phosphoserine modification. Residues 191 to 273 are disordered; the sequence is QMKQQQREDP…STPKPTSGLT (83 aa). Residues 207-222 are compositionally biased toward low complexity; it reads PLAKSPLRSPSLSPVP. A compositionally biased stretch (polar residues) spans 228–251; it reads QQRTPPNSMTANSLGMSSAVMTPN. The segment covering 252-270 has biased composition (low complexity); it reads TPSMQQQPQLQQSTPKPTS. The POU-specific domain maps to 286-360; that stretch reads EETTDLEELE…LLQKWLEDAD (75 aa). A DNA-binding region (homeobox) is located at residues 391 to 450; that stretch reads RRKKRTSIETTVRTTLEKAFLMNCKPTSEEISQLSERLNMDKEVIRVWFCNRRQKEKRIN.

This sequence belongs to the POU transcription factor family. Class-2 subfamily. As to expression, initial expression in cellular blastoderm stage, then in ectodermal stripes during germband extension. Broad expression in the neuroectoderm followed by limitation to discrete subsets of CNS cells, and expression in specific PNS neurons and support cells.

The protein localises to the nucleus. In terms of biological role, DNA-binding regulatory protein implicated in early development. Involved in neuronal cell fate decision. May act as an octamer-dependent activator of transcription. Could also play an early role in specific ectodermal cells, and a subsequent role in the embryonic nervous system. The protein is POU domain protein 2, isoform A (pdm2) of Drosophila melanogaster (Fruit fly).